The following is a 511-amino-acid chain: 2-isopropylmalate synthase (511 aa).

One can recognise a Pyruvate carboxyltransferase domain in the interval 6–269; that stretch reads IIIFDTTLRD…YTDIKCENIF (264 aa). Residues D15, H203, H205, and N239 each contribute to the Mn(2+) site. Residues 394-511 form a regulatory domain region; sequence VIEKLSVISG…SLKVEERKMA (118 aa).

The protein belongs to the alpha-IPM synthase/homocitrate synthase family. LeuA type 1 subfamily. In terms of assembly, homodimer. Mn(2+) is required as a cofactor.

The protein resides in the cytoplasm. The enzyme catalyses 3-methyl-2-oxobutanoate + acetyl-CoA + H2O = (2S)-2-isopropylmalate + CoA + H(+). It functions in the pathway amino-acid biosynthesis; L-leucine biosynthesis; L-leucine from 3-methyl-2-oxobutanoate: step 1/4. In terms of biological role, catalyzes the condensation of the acetyl group of acetyl-CoA with 3-methyl-2-oxobutanoate (2-ketoisovalerate) to form 3-carboxy-3-hydroxy-4-methylpentanoate (2-isopropylmalate). This Campylobacter jejuni (strain RM1221) protein is 2-isopropylmalate synthase.